A 550-amino-acid polypeptide reads, in one-letter code: Carnitine transporter (550 aa).

The next 12 helical transmembrane spans lie at 15–35 (FLAV…AIYS), 53–73 (FTTP…GLAF), 92–112 (SWIF…WGFL), 137–157 (VAYS…LASI), 196–216 (MFLL…AVTF), 230–250 (FMTK…SSYV), 263–283 (VCLG…TQFI), 317–337 (WTVF…LFVT), 347–367 (EVIF…FGVF), 401–421 (LLPA…VFLA), 451–471 (LFWC…KAPL), and 477–497 (ATIV…YGLV).

The protein belongs to the BCCT transporter (TC 2.A.15) family.

The protein resides in the cell inner membrane. Its activity is regulated as follows. Inhibited by the protonophore 3,3',4',5-tetrachlorosalicylanilide (TCS). Not activated by osmolarity. Its function is as follows. Catalyzes the energy-dependent uptake of carnitine and is essential for growth on carnitine. Can also mediate the uptake of choline. Is probably a proton:substrate symporter. This Acinetobacter baumannii (strain ATCC 19606 / DSM 30007 / JCM 6841 / CCUG 19606 / CIP 70.34 / NBRC 109757 / NCIMB 12457 / NCTC 12156 / 81) protein is Carnitine transporter.